A 284-amino-acid polypeptide reads, in one-letter code: D-tagatose-1,6-bisphosphate aldolase subunit GatY (284 aa).

The Proton donor role is filled by D82. Residues H83 and H180 each contribute to the Zn(2+) site. Position 181 (G181) interacts with dihydroxyacetone phosphate. H208 lines the Zn(2+) pocket. Residues 209–211 (GAS) and 230–233 (NVAT) contribute to the dihydroxyacetone phosphate site.

Belongs to the class II fructose-bisphosphate aldolase family. TagBP aldolase GatY subfamily. As to quaternary structure, forms a complex with GatZ. It depends on Zn(2+) as a cofactor.

The catalysed reaction is D-tagatofuranose 1,6-bisphosphate = D-glyceraldehyde 3-phosphate + dihydroxyacetone phosphate. Its pathway is carbohydrate metabolism; D-tagatose 6-phosphate degradation; D-glyceraldehyde 3-phosphate and glycerone phosphate from D-tagatose 6-phosphate: step 2/2. Catalytic subunit of the tagatose-1,6-bisphosphate aldolase GatYZ, which catalyzes the reversible aldol condensation of dihydroxyacetone phosphate (DHAP or glycerone-phosphate) with glyceraldehyde 3-phosphate (G3P) to produce tagatose 1,6-bisphosphate (TBP). Requires GatZ subunit for full activity and stability. Is involved in the catabolism of galactitol. The protein is D-tagatose-1,6-bisphosphate aldolase subunit GatY of Escherichia coli (strain K12 / MC4100 / BW2952).